Consider the following 161-residue polypeptide: Probable ubiquitin-conjugating enzyme E2 17 (161 aa).

A UBC core domain is found at 15–161 (IATNRLQKEF…TRWRFHDDKV (147 aa)). Cysteine 99 serves as the catalytic Glycyl thioester intermediate.

The protein belongs to the ubiquitin-conjugating enzyme family.

It catalyses the reaction S-ubiquitinyl-[E1 ubiquitin-activating enzyme]-L-cysteine + [E2 ubiquitin-conjugating enzyme]-L-cysteine = [E1 ubiquitin-activating enzyme]-L-cysteine + S-ubiquitinyl-[E2 ubiquitin-conjugating enzyme]-L-cysteine.. The protein operates within protein modification; protein ubiquitination. In terms of biological role, accepts the ubiquitin from the E1 complex and catalyzes its covalent attachment to other proteins. In Arabidopsis thaliana (Mouse-ear cress), this protein is Probable ubiquitin-conjugating enzyme E2 17 (UBC17).